The primary structure comprises 219 residues: MVDLKTKAFDFSQNFTISLDGPAASGKGTIGLILAKKFSLKYFQSSIVYRQLAFDCINQKIDVTDIDAVIALSKELNLDNNFDLENEDIGNIASQIAVISEVRNNLNKYLINLVKTTLRIIMEGRDIGTVIAPDADLKVFITANPQIRAERRYKQLQAKGKTCILDEILRQIILRDKRDKERKAAPLLPASDALIIDTSELSAIEVVEEITNYIKNKLT.

21-29 (GPAASGKGT) serves as a coordination point for ATP.

It belongs to the cytidylate kinase family. Type 1 subfamily.

It localises to the cytoplasm. The catalysed reaction is CMP + ATP = CDP + ADP. It catalyses the reaction dCMP + ATP = dCDP + ADP. This chain is Cytidylate kinase, found in Rickettsia felis (strain ATCC VR-1525 / URRWXCal2) (Rickettsia azadi).